We begin with the raw amino-acid sequence, 170 residues long: Peptide deformylase (170 aa).

2 residues coordinate Fe cation: Cys94 and His136. The active site involves Glu137. His140 contacts Fe cation.

This sequence belongs to the polypeptide deformylase family. Requires Fe(2+) as cofactor.

It catalyses the reaction N-terminal N-formyl-L-methionyl-[peptide] + H2O = N-terminal L-methionyl-[peptide] + formate. Removes the formyl group from the N-terminal Met of newly synthesized proteins. Requires at least a dipeptide for an efficient rate of reaction. N-terminal L-methionine is a prerequisite for activity but the enzyme has broad specificity at other positions. The protein is Peptide deformylase of Agrobacterium fabrum (strain C58 / ATCC 33970) (Agrobacterium tumefaciens (strain C58)).